Here is a 322-residue protein sequence, read N- to C-terminus: ADACSGLQGFLIFHSFGGGTGSGFTSLLMERLSVDYGKKSKLEFAIYPAPQVSTAVVEPYNSILTTHTTLEHSDCAFMVDNEAIYDICCRNLDIERPTYTNLNRLISQIVSSITASLRFDGALNVDLTEFQTNLVPYPRIHFPLVTYAPIISSERAYHEQLSVAEITSSCFEPNNQMVKCDPRHGKYMACCMLYRGDVVPKDVNVAIAAIKTKRNIQFVDWCPTGVKVGINYQPPTVVPGGDLAQVQRAVCMLSNTTAIAEAWARLDHKFDLMYAKRAFVHWYVSEGMEEGEFAEAREDLAALEKDYEEVGTDSFEDENDEE.

GTP contacts are provided by Ser-15, Gly-19, Thr-20, Thr-54, Asn-81, and Asn-103. Residue Glu-129 is part of the active site.

This sequence belongs to the tubulin family. In terms of assembly, dimer of alpha and beta chains. A typical microtubule is a hollow water-filled tube with an outer diameter of 25 nm and an inner diameter of 15 nM. Alpha-beta heterodimers associate head-to-tail to form protofilaments running lengthwise along the microtubule wall with the beta-tubulin subunit facing the microtubule plus end conferring a structural polarity. Microtubules usually have 13 protofilaments but different protofilament numbers can be found in some organisms and specialized cells. It depends on Mg(2+) as a cofactor. Post-translationally, some glutamate residues at the C-terminus are polyglycylated, resulting in polyglycine chains on the gamma-carboxyl group. Glycylation is mainly limited to tubulin incorporated into axonemes (cilia and flagella) whereas glutamylation is prevalent in neuronal cells, centrioles, axonemes, and the mitotic spindle. Both modifications can coexist on the same protein on adjacent residues, and lowering polyglycylation levels increases polyglutamylation, and reciprocally. The precise function of polyglycylation is still unclear. Some glutamate residues at the C-terminus are polyglutamylated, resulting in polyglutamate chains on the gamma-carboxyl group. Polyglutamylation plays a key role in microtubule severing by spastin (SPAST). SPAST preferentially recognizes and acts on microtubules decorated with short polyglutamate tails: severing activity by SPAST increases as the number of glutamates per tubulin rises from one to eight, but decreases beyond this glutamylation threshold.

It is found in the cytoplasm. The protein localises to the cytoskeleton. It carries out the reaction GTP + H2O = GDP + phosphate + H(+). In terms of biological role, tubulin is the major constituent of microtubules, a cylinder consisting of laterally associated linear protofilaments composed of alpha- and beta-tubulin heterodimers. Microtubules grow by the addition of GTP-tubulin dimers to the microtubule end, where a stabilizing cap forms. Below the cap, tubulin dimers are in GDP-bound state, owing to GTPase activity of alpha-tubulin. The protein is Tubulin alpha-4 chain of Gallus gallus (Chicken).